We begin with the raw amino-acid sequence, 185 residues long: Large ribosomal subunit protein uL5 (185 aa).

This sequence belongs to the universal ribosomal protein uL5 family. Part of the 50S ribosomal subunit; part of the 5S rRNA/L5/L18/L25 subcomplex. Contacts the 5S rRNA and the P site tRNA. Forms a bridge to the 30S subunit in the 70S ribosome.

Its function is as follows. This is one of the proteins that bind and probably mediate the attachment of the 5S RNA into the large ribosomal subunit, where it forms part of the central protuberance. In the 70S ribosome it contacts protein S13 of the 30S subunit (bridge B1b), connecting the 2 subunits; this bridge is implicated in subunit movement. Contacts the P site tRNA; the 5S rRNA and some of its associated proteins might help stabilize positioning of ribosome-bound tRNAs. This Streptomyces avermitilis (strain ATCC 31267 / DSM 46492 / JCM 5070 / NBRC 14893 / NCIMB 12804 / NRRL 8165 / MA-4680) protein is Large ribosomal subunit protein uL5.